Consider the following 182-residue polypeptide: ATP-dependent protease subunit HslV (182 aa).

Thr10 is an active-site residue. Na(+) contacts are provided by Ala164, Cys167, and Thr170.

Belongs to the peptidase T1B family. HslV subfamily. In terms of assembly, a double ring-shaped homohexamer of HslV is capped on each side by a ring-shaped HslU homohexamer. The assembly of the HslU/HslV complex is dependent on binding of ATP.

It is found in the cytoplasm. It catalyses the reaction ATP-dependent cleavage of peptide bonds with broad specificity.. Its activity is regulated as follows. Allosterically activated by HslU binding. Protease subunit of a proteasome-like degradation complex believed to be a general protein degrading machinery. In Chelativorans sp. (strain BNC1), this protein is ATP-dependent protease subunit HslV.